The following is a 385-amino-acid chain: Probable alpha-galactosidase (385 aa).

Positions 1-19 (MMKIAATLLATIALATVNA) are cleaved as a signal peptide. Intrachain disulfides connect Cys-40/Cys-72 and Cys-119/Cys-149. Asp-147 acts as the Nucleophile in catalysis. 180–184 (DWGYE) lines the substrate pocket. Asp-202 acts as the Proton donor in catalysis.

This sequence belongs to the glycosyl hydrolase 27 family.

The enzyme catalyses Hydrolysis of terminal, non-reducing alpha-D-galactose residues in alpha-D-galactosides, including galactose oligosaccharides, galactomannans and galactolipids.. The protein is Probable alpha-galactosidase (melA) of Dictyostelium discoideum (Social amoeba).